Reading from the N-terminus, the 514-residue chain is ATP synthase subunit alpha (514 aa).

170–177 lines the ATP pocket; sequence GDRQIGKT.

This sequence belongs to the ATPase alpha/beta chains family. F-type ATPases have 2 components, CF(1) - the catalytic core - and CF(0) - the membrane proton channel. CF(1) has five subunits: alpha(3), beta(3), gamma(1), delta(1), epsilon(1). CF(0) has three main subunits: a(1), b(2) and c(9-12). The alpha and beta chains form an alternating ring which encloses part of the gamma chain. CF(1) is attached to CF(0) by a central stalk formed by the gamma and epsilon chains, while a peripheral stalk is formed by the delta and b chains.

Its subcellular location is the cell inner membrane. It catalyses the reaction ATP + H2O + 4 H(+)(in) = ADP + phosphate + 5 H(+)(out). Produces ATP from ADP in the presence of a proton gradient across the membrane. The alpha chain is a regulatory subunit. This Pseudomonas syringae pv. tomato (strain ATCC BAA-871 / DC3000) protein is ATP synthase subunit alpha.